A 165-amino-acid polypeptide reads, in one-letter code: uncharacterized protein (165 aa).

A signal peptide spans 1–25 (MKRVLFSVIVFTAVGFTFCQSKAHA).

This is an uncharacterized protein from Bacillus subtilis (strain 168).